The primary structure comprises 816 residues: MPNWETSTAAPSYEQHNAWYSSMFAANIKQEPLSHHHHHHGQQHHDNHSNSNSGASSPRQSPLPSPIPPSTQLEQYLKQQQQQQQQQQQPMDTLCAAAMTPSPSNNDQNSLQHFDATLQQQLLQQQQYQQHFQAAQHQQQQHHHLALGGFNPLTPPGLPNPMQHYYGGNMRPSPQPTPTAAPTAVAAAIQTGDKLQALTPPMDVTPPKSPAKSQQSSAEPEKEHDLMSNSSEDMKYMAESEDDDSNIRMPIYNSHGKMKNYKCKTCGVVAITKVDFWAHTRTHMKPDKILQCAKCPFVTEFKHHLEYHIRKHKNQKPFQCDKCSYTCVNKSMLNSHRKSHSSVYQYRCADCDYATKYCHSFKLHLRKYGHKPGMVLDEDGTPNPSLVIDVYGTRRGPKSKSFSGSGSSCSSTSKRSNASAAAAQQQQQPVATSQLSAALQGFPMPAAAAGTAAGAAGTAAPAAVAPVSPPSPAKSVASVEQAPSLPSALLPPLASLLQQNRNMAFFPYWNLNLQVLAAQQQAAVLAQLSPRMRDQLQQQQQQQHQQQQQQQQQQQQQQQQLPAHSENEEDEEEEEHEDDFERKSVDSAMDLSQGTPVKEEPQQQQQQQQLPHSNHMAINLKLKDEDTPLISSSSASRRKGRVLKLDTLLQLKSAAMSSPEQQLKLPASVLPTASSPIAGSSANKQLADDPCSGASSADESMETGRVPQVNISASSTASSSGNSSNASSSTSNPTAAATVATSGTVSSSSSSSTTTSSSAPAIYECKYCDIYFKDAVLYTIHMGYHSCDDVFKCNMCGEKCDGPVGLFVHMARNAHS.

Disordered regions lie at residues 33–92 (LSHH…QPMD), 129–151 (QQHFQAAQHQQQQHHHLALGGFN), 165–185 (YYGGNMRPSPQPTPTAAPTAV), and 197–229 (ALTPPMDVTPPKSPAKSQQSSAEPEKEHDLMSN). 3 stretches are compositionally biased toward low complexity: residues 49–60 (SNSNSGASSPRQ), 79–89 (QQQQQQQQQQQ), and 129–139 (QQHFQAAQHQQ). Thr-199 is subject to Phosphothreonine. Phosphoserine occurs at positions 209, 228, 230, and 231. A compositionally biased stretch (basic and acidic residues) spans 219–229 (EPEKEHDLMSN). C2H2-type zinc fingers lie at residues 261–283 (YKCKTCGVVAITKVDFWAHTRTH), 290–312 (LQCAKCPFVTEFKHHLEYHIRKH), 318–340 (FQCDKCSYTCVNKSMLNSHRKSH), and 346–364 (YRCADCDYATKYCHSFKLH). Disordered regions lie at residues 387-427 (VIDV…QQQQ), 536-612 (LQQQ…QLPH), and 679-734 (GSSA…SNPT). Composition is skewed to low complexity over residues 399–427 (SKSFSGSGSSCSSTSKRSNASAAAAQQQQ) and 536–560 (LQQQQQQQHQQQQQQQQQQQQQQQQ). The segment covering 567–578 (NEEDEEEEEHED) has biased composition (acidic residues). A phosphoserine mark is found at Ser-584 and Ser-587. The span at 712–734 (SASSTASSSGNSSNASSSTSNPT) shows a compositional bias: low complexity. C2H2-type zinc fingers lie at residues 763-785 (YECKYCDIYFKDAVLYTIHMGYH) and 791-815 (FKCNMCGEKCDGPVGLFVHMARNAH).

This sequence belongs to the hunchback C2H2-type zinc-finger protein family.

It is found in the nucleus. Functionally, gap class segmentation protein that controls development of head structures. This Drosophila virilis (Fruit fly) protein is Protein hunchback.